Here is a 497-residue protein sequence, read N- to C-terminus: Serine/threonine protein phosphatase 2A 57 kDa regulatory subunit B' epsilon isoform (497 aa).

Positions 12 to 71 (KFNKSDQHHQDNNNNNNNTSTNTVVRGSRTTTPAPSSVSNGESQTTAQSPSQTPNHPMFT) are disordered. The segment covering 23–34 (NNNNNNNTSTNT) has biased composition (low complexity). The segment covering 35-71 (VVRGSRTTTPAPSSVSNGESQTTAQSPSQTPNHPMFT) has biased composition (polar residues).

It belongs to the phosphatase 2A regulatory subunit B56 family. In terms of assembly, PP2A consists of a common heteromeric enzyme, composed of a catalytic subunit (subunits C), a constant regulatory subunit (subunit A), and a variety of regulatory subunits such as subunits B (the R2/B/PR55/B55, R3/B''/PR72/PR130/PR59 and R5/B'/B56 families). As to expression, expressed ubiquitously.

It is found in the cytoplasm. In terms of biological role, the B regulatory subunit may modulate substrate selectivity and catalytic activity, and may also direct the localization of the catalytic enzyme to a particular subcellular compartment. This chain is Serine/threonine protein phosphatase 2A 57 kDa regulatory subunit B' epsilon isoform (B'EPSILON), found in Arabidopsis thaliana (Mouse-ear cress).